A 60-amino-acid polypeptide reads, in one-letter code: Large ribosomal subunit protein uL30 (60 aa).

Belongs to the universal ribosomal protein uL30 family. As to quaternary structure, part of the 50S ribosomal subunit.

This is Large ribosomal subunit protein uL30 from Streptomyces griseus subsp. griseus (strain JCM 4626 / CBS 651.72 / NBRC 13350 / KCC S-0626 / ISP 5235).